Consider the following 394-residue polypeptide: Ribulose bisphosphate carboxylase large chain (394 aa).

N6,N6,N6-trimethyllysine is present on Lys5. 2 residues coordinate substrate: Asn114 and Thr164. Lys166 functions as the Proton acceptor in the catalytic mechanism. Lys168 is a substrate binding site. 3 residues coordinate Mg(2+): Lys192, Asp194, and Glu195. Lys192 bears the N6-carboxylysine mark. Residue His285 is the Proton acceptor of the active site. Residues Arg286, His318, and Ser370 each contribute to the substrate site.

The protein belongs to the RuBisCO large chain family. Type I subfamily. In terms of assembly, heterohexadecamer of 8 large chains and 8 small chains. Mg(2+) is required as a cofactor.

The protein localises to the plastid. It is found in the chloroplast. The catalysed reaction is 2 (2R)-3-phosphoglycerate + 2 H(+) = D-ribulose 1,5-bisphosphate + CO2 + H2O. It catalyses the reaction D-ribulose 1,5-bisphosphate + O2 = 2-phosphoglycolate + (2R)-3-phosphoglycerate + 2 H(+). Functionally, ruBisCO catalyzes two reactions: the carboxylation of D-ribulose 1,5-bisphosphate, the primary event in carbon dioxide fixation, as well as the oxidative fragmentation of the pentose substrate in the photorespiration process. Both reactions occur simultaneously and in competition at the same active site. The chain is Ribulose bisphosphate carboxylase large chain (rbcL) from Victoria cruziana (Santa Cruz water lily).